The following is a 632-amino-acid chain: tRNA uridine 5-carboxymethylaminomethyl modification enzyme MnmG (632 aa).

Residues 15 to 20 (GAGHAG), Ile127, and Ser182 contribute to the FAD site. 276–290 (GPRYCPSIEDKIVRF) contacts NAD(+). Gln373 contributes to the FAD binding site.

This sequence belongs to the MnmG family. In terms of assembly, homodimer. Heterotetramer of two MnmE and two MnmG subunits. FAD serves as cofactor.

Its subcellular location is the cytoplasm. Its function is as follows. NAD-binding protein involved in the addition of a carboxymethylaminomethyl (cmnm) group at the wobble position (U34) of certain tRNAs, forming tRNA-cmnm(5)s(2)U34. In Streptococcus pyogenes serotype M28 (strain MGAS6180), this protein is tRNA uridine 5-carboxymethylaminomethyl modification enzyme MnmG.